A 580-amino-acid polypeptide reads, in one-letter code: Aspartate--tRNA ligase (580 aa).

Residue Glu173 participates in L-aspartate binding. The tract at residues 195–198 is aspartate; the sequence is QIYK. Residue Arg217 coordinates L-aspartate. Residues 217 to 219 and Gln226 each bind ATP; that span reads RDE. His443 is a binding site for L-aspartate. Glu477 contacts ATP. Arg484 contacts L-aspartate. 529 to 532 provides a ligand contact to ATP; that stretch reads GIER.

Belongs to the class-II aminoacyl-tRNA synthetase family. Type 1 subfamily. In terms of assembly, homodimer.

It localises to the cytoplasm. It catalyses the reaction tRNA(Asp) + L-aspartate + ATP = L-aspartyl-tRNA(Asp) + AMP + diphosphate. Its function is as follows. Catalyzes the attachment of L-aspartate to tRNA(Asp) in a two-step reaction: L-aspartate is first activated by ATP to form Asp-AMP and then transferred to the acceptor end of tRNA(Asp). The chain is Aspartate--tRNA ligase from Malacoplasma penetrans (strain HF-2) (Mycoplasma penetrans).